The primary structure comprises 358 residues: Arogenate dehydrogenase 2, chloroplastic (358 aa).

The N-terminal 36 residues, 1–36 (MLLHFSPAKPLISPPNLRRNSPTFLISPPRSLRIRA), are a transit peptide targeting the chloroplast. In terms of domain architecture, Prephenate/arogenate dehydrogenase spans 59-338 (LKIAVLGFGN…KKTEQKLLND (280 aa)). Residues 336–358 (LNDGGVVPMNDISSSSSSSSSSS) are disordered. A compositionally biased stretch (low complexity) spans 348 to 358 (SSSSSSSSSSS).

The protein belongs to the prephenate/arogenate dehydrogenase family. As to expression, expressed in roots, stems, leaves, flowers, siliques and seeds. More abundant in seeds.

Its subcellular location is the plastid. It localises to the chloroplast. It catalyses the reaction L-arogenate + NADP(+) = L-tyrosine + CO2 + NADPH. Its pathway is amino-acid biosynthesis; L-tyrosine biosynthesis; L-tyrosine from L-arogenate (NADP(+) route): step 1/1. In terms of biological role, involved in the biosynthesis of tyrosine. Has a weak prephenate dehydrogenase activity. The chain is Arogenate dehydrogenase 2, chloroplastic (TYRAAT2) from Arabidopsis thaliana (Mouse-ear cress).